Here is a 488-residue protein sequence, read N- to C-terminus: Long chain base biosynthesis protein 2a (488 aa).

The chain crosses the membrane as a helical span at residues 4–24 (LPYTTALTTLFSYGLLFAFGQ). Lys311 carries the post-translational modification N6-(pyridoxal phosphate)lysine.

It belongs to the class-II pyridoxal-phosphate-dependent aminotransferase family. Heterodimer with LCB1. Component of the serine palmitoyltransferase (SPT) complex, composed of LCB1 and LCB2. Pyridoxal 5'-phosphate serves as cofactor.

It localises to the endoplasmic reticulum membrane. It carries out the reaction L-serine + hexadecanoyl-CoA + H(+) = 3-oxosphinganine + CO2 + CoA. Its pathway is lipid metabolism; sphingolipid metabolism. In terms of biological role, serine palmitoyltransferase (SPT). The heterodimer formed with LCB1 constitutes the catalytic core. In Oryza sativa subsp. japonica (Rice), this protein is Long chain base biosynthesis protein 2a.